We begin with the raw amino-acid sequence, 97 residues long: Mitochondrial import inner membrane translocase subunit Tim8 A (97 aa).

The Twin CX3C motif signature appears at 43–66; sequence CWEKCMDKPGPKLDSRAEACFVNC. 2 cysteine pairs are disulfide-bonded: Cys43/Cys66 and Cys47/Cys62. Residues Ser57, Ser87, Ser94, and Ser96 each carry the phosphoserine modification.

This sequence belongs to the small Tim family. Heterohexamer; composed of 3 copies of TIMM8A and 3 copies of TIMM13, named soluble 70 kDa complex. Associates with the TIM22 complex, whose core is composed of TIMM22.

It is found in the mitochondrion inner membrane. Its function is as follows. Mitochondrial intermembrane chaperone that participates in the import and insertion of some multi-pass transmembrane proteins into the mitochondrial inner membrane. Also required for the transfer of beta-barrel precursors from the TOM complex to the sorting and assembly machinery (SAM complex) of the outer membrane. Acts as a chaperone-like protein that protects the hydrophobic precursors from aggregation and guide them through the mitochondrial intermembrane space. The TIMM8-TIMM13 complex mediates the import of proteins such as TIMM23, SLC25A12/ARALAR1 and SLC25A13/ARALAR2, while the predominant TIMM9-TIMM10 70 kDa complex mediates the import of much more proteins. The polypeptide is Mitochondrial import inner membrane translocase subunit Tim8 A (TIMM8A) (Bos taurus (Bovine)).